A 196-amino-acid chain; its full sequence is Nucleoside triphosphate pyrophosphatase (196 aa).

Asp73 (proton acceptor) is an active-site residue.

The protein belongs to the Maf family. The cofactor is a divalent metal cation.

Its subcellular location is the cytoplasm. It catalyses the reaction a ribonucleoside 5'-triphosphate + H2O = a ribonucleoside 5'-phosphate + diphosphate + H(+). The enzyme catalyses a 2'-deoxyribonucleoside 5'-triphosphate + H2O = a 2'-deoxyribonucleoside 5'-phosphate + diphosphate + H(+). Functionally, nucleoside triphosphate pyrophosphatase. May have a dual role in cell division arrest and in preventing the incorporation of modified nucleotides into cellular nucleic acids. The protein is Nucleoside triphosphate pyrophosphatase of Anaplasma marginale (strain St. Maries).